A 300-amino-acid chain; its full sequence is F-box/LRR-repeat protein 15 (300 aa).

Met1 is modified (N-acetylmethionine). The 48-residue stretch at 19-66 (LLDLPWEDVLLPHVLNWVPLRQLLRLQRVSRAFRALVQLHLARLRRFD) folds into the F-box domain. The segment at 113–269 (NPQLRSVALA…EPSLSRLRKR (157 aa)) is interaction with SMURF1. 5 LRR repeats span residues 141–162 (RLQR…RGLA), 167–188 (ALEE…VYLA), 194–215 (GLRS…QELA), 220–241 (QLEH…RTLA), and 246–267 (ALRS…SRLR).

This sequence belongs to the FBXL15 family. Part of the SCF (SKP1-CUL1-F-box) E3 ubiquitin-protein ligase complex SCF(FBXL15) composed of CUL1, SKP1, RBX1 and FBXL15.

The protein resides in the cytoplasm. Its pathway is protein modification; protein ubiquitination. Substrate recognition component of a SCF (SKP1-CUL1-F-box protein) E3 ubiquitin-protein ligase complex which mediates the ubiquitination and subsequent proteasomal degradation of SMURF1, thereby acting as a positive regulator of the BMP signaling pathway. Required for dorsal/ventral pattern formation. Also mediates ubiquitination of SMURF2 and WWP2. Required for bone mass maintenance. This Rattus norvegicus (Rat) protein is F-box/LRR-repeat protein 15 (Fbxl15).